A 473-amino-acid chain; its full sequence is Reticulon-4 receptor (473 aa).

The N-terminal stretch at 1–26 (MKRASSGGSRLLAWVLWLQAWRVATP) is a signal peptide. 2 disulfides stabilise this stretch: cysteine 27–cysteine 33 and cysteine 31–cysteine 43. One can recognise an LRRNT domain in the interval 27-57 (CPGACVCYNEPKVTTSCPQQGLQAVPTGIPA). LRR repeat units lie at residues 56–79 (PASS…SFQS), 80–103 (CRNL…AFTG), 105–128 (TLLE…TFRG), 129–152 (LGHL…LFRG), 153–176 (LAAL…TFRD), 178–200 (GNLT…AFRG), 202–224 (HSLD…AFRD), 225–248 (LGRL…VLVP), and 250–273 (RSLQ…PLWA). N-linked (GlcNAc...) asparagine glycosylation is present at asparagine 82. Residues 260–310 (NPWVCDCRARPLWAWLQKFRGSSSEVPCNLPQRLAGRDLKRLAASDLEGCA) enclose the LRRCT domain. 3 disulfide bridges follow: cysteine 264–cysteine 287, cysteine 266–cysteine 335, and cysteine 309–cysteine 336. The disordered stretch occupies residues 346–446 (VLEPGRPASA…GSSGTGDAEG (101 aa)). Residue asparagine 372 is glycosylated (N-linked (GlcNAc...) asparagine). A compositionally biased stretch (basic residues) spans 413 to 429 (PRRRPGCSRKNRTRSHC). Residues 434 to 445 (AGSGSSGTGDAE) are compositionally biased toward gly residues. Serine 447 carries the GPI-anchor amidated serine lipid modification. The propeptide at 448-473 (GALPALACSLAPLGLALVLWTVLGPC) is removed in mature form.

The protein belongs to the Nogo receptor family. In terms of assembly, homodimer. Interacts with MAG. Interacts with RTN4 and OMG. Interacts with LINGO1 and NGFR. Interacts with KIAA0319L. Interacts with OLFM1; this inhibits interaction with LINGO1 and NGFR. In terms of processing, N-glycosylated. O-glycosylated. Contains terminal sialic acid groups on its glycan chains. In terms of tissue distribution, detected in embryonic cerebellum, in spinal cord motor neurons and in dorsal root ganglia. Detected in adult brain, in neocortex, hippocampus, striatum, thalamus and dorsal root ganglion neurons (at protein level).

The protein localises to the cell membrane. It is found in the membrane raft. The protein resides in the cell projection. It localises to the dendrite. Its subcellular location is the perikaryon. The protein localises to the axon. Receptor for RTN4, OMG and MAG. Functions as a receptor for the sialylated gangliosides GT1b and GM1. Besides, functions as a receptor for chondroitin sulfate proteoglycans. Can also bind heparin. Intracellular signaling cascades are triggered via the coreceptor NGFR. Signaling mediates activation of Rho and downstream reorganization of the actin cytoskeleton. Mediates axonal growth inhibition. May play a role in regulating axon regeneration and neuronal plasticity in the adult central nervous system. Plays a role in postnatal brain development. Required for normal axon migration across the brain midline and normal formation of the corpus callosum. Protects motoneurons against apoptosis; protection against apoptosis is probably mediated via interaction with MAG. Acts in conjunction with RTN4 and LINGO1 in regulating neuronal precursor cell motility during cortical development. Like other family members, plays a role in restricting the number dendritic spines and the number of synapses that are formed during brain development. The polypeptide is Reticulon-4 receptor (Rtn4r) (Rattus norvegicus (Rat)).